The primary structure comprises 523 residues: 2-isopropylmalate synthase (523 aa).

The Pyruvate carboxyltransferase domain occupies 5 to 267; the sequence is VIIFDTTLRD…HTAINHQEIW (263 aa). Asp-14, His-202, His-204, and Asn-238 together coordinate Mn(2+). The tract at residues 392–523 is regulatory domain; the sequence is RLDYFSVQSG…QHNENNKETV (132 aa).

It belongs to the alpha-IPM synthase/homocitrate synthase family. LeuA type 1 subfamily. In terms of assembly, homodimer. Mn(2+) is required as a cofactor.

Its subcellular location is the cytoplasm. It catalyses the reaction 3-methyl-2-oxobutanoate + acetyl-CoA + H2O = (2S)-2-isopropylmalate + CoA + H(+). Its pathway is amino-acid biosynthesis; L-leucine biosynthesis; L-leucine from 3-methyl-2-oxobutanoate: step 1/4. Functionally, catalyzes the condensation of the acetyl group of acetyl-CoA with 3-methyl-2-oxobutanoate (2-ketoisovalerate) to form 3-carboxy-3-hydroxy-4-methylpentanoate (2-isopropylmalate). The sequence is that of 2-isopropylmalate synthase from Escherichia coli O81 (strain ED1a).